The primary structure comprises 176 residues: Zinc finger protein 428 (176 aa).

The disordered stretch occupies residues 1 to 152; sequence MTETREPTET…EEEGGTYHCT (152 aa). The segment covering 16 to 46 has biased composition (acidic residues); sequence LEEDDEDLSPEPDSEEEEEEEEEETTDDPEY. Thr96 bears the Phosphothreonine mark. The segment covering 126 to 138 has biased composition (basic and acidic residues); that stretch reads PSRTGETRPAGRD. The segment at 149–171 adopts a C2H2-type zinc-finger fold; it reads YHCTECEDSFDNLGELHGHFMLH.

This Mus musculus (Mouse) protein is Zinc finger protein 428 (Znf428).